The chain runs to 425 residues: Serine hydroxymethyltransferase (425 aa).

Residues leucine 122 and 126–128 contribute to the (6S)-5,6,7,8-tetrahydrofolate site; that span reads GHL. An N6-(pyridoxal phosphate)lysine modification is found at lysine 231. (6S)-5,6,7,8-tetrahydrofolate is bound at residue 355–357; it reads SPF.

It belongs to the SHMT family. Homodimer. It depends on pyridoxal 5'-phosphate as a cofactor.

It localises to the cytoplasm. It catalyses the reaction (6R)-5,10-methylene-5,6,7,8-tetrahydrofolate + glycine + H2O = (6S)-5,6,7,8-tetrahydrofolate + L-serine. The protein operates within one-carbon metabolism; tetrahydrofolate interconversion. It functions in the pathway amino-acid biosynthesis; glycine biosynthesis; glycine from L-serine: step 1/1. Functionally, catalyzes the reversible interconversion of serine and glycine with tetrahydrofolate (THF) serving as the one-carbon carrier. This reaction serves as the major source of one-carbon groups required for the biosynthesis of purines, thymidylate, methionine, and other important biomolecules. Also exhibits THF-independent aldolase activity toward beta-hydroxyamino acids, producing glycine and aldehydes, via a retro-aldol mechanism. The chain is Serine hydroxymethyltransferase from Rippkaea orientalis (strain PCC 8801 / RF-1) (Cyanothece sp. (strain PCC 8801)).